The primary structure comprises 395 residues: Phosphoglycerate kinase (395 aa).

Substrate contacts are provided by residues 21–23 (DFN), R36, 59–62 (HLGR), R120, and R153. ATP is bound by residues K203, G294, E325, and 351-354 (GGDS).

Belongs to the phosphoglycerate kinase family. As to quaternary structure, monomer.

Its subcellular location is the cytoplasm. The catalysed reaction is (2R)-3-phosphoglycerate + ATP = (2R)-3-phospho-glyceroyl phosphate + ADP. The protein operates within carbohydrate degradation; glycolysis; pyruvate from D-glyceraldehyde 3-phosphate: step 2/5. The polypeptide is Phosphoglycerate kinase (Finegoldia magna (strain ATCC 29328 / DSM 20472 / WAL 2508) (Peptostreptococcus magnus)).